The following is a 305-amino-acid chain: UDP-3-O-acyl-N-acetylglucosamine deacetylase (305 aa).

Zn(2+) contacts are provided by His-79, His-238, and Asp-242. His-265 acts as the Proton donor in catalysis.

This sequence belongs to the LpxC family. Requires Zn(2+) as cofactor.

The catalysed reaction is a UDP-3-O-[(3R)-3-hydroxyacyl]-N-acetyl-alpha-D-glucosamine + H2O = a UDP-3-O-[(3R)-3-hydroxyacyl]-alpha-D-glucosamine + acetate. Its pathway is glycolipid biosynthesis; lipid IV(A) biosynthesis; lipid IV(A) from (3R)-3-hydroxytetradecanoyl-[acyl-carrier-protein] and UDP-N-acetyl-alpha-D-glucosamine: step 2/6. Functionally, catalyzes the hydrolysis of UDP-3-O-myristoyl-N-acetylglucosamine to form UDP-3-O-myristoylglucosamine and acetate, the committed step in lipid A biosynthesis. This Shigella dysenteriae serotype 1 (strain Sd197) protein is UDP-3-O-acyl-N-acetylglucosamine deacetylase.